Consider the following 452-residue polypeptide: Pup--protein ligase (452 aa).

Mg(2+) is bound at residue E9. R53 contributes to the ATP binding site. Y55 provides a ligand contact to Mg(2+). D57 (proton acceptor) is an active-site residue. E63 contacts Mg(2+). 2 residues coordinate ATP: T66 and W419.

The protein belongs to the Pup ligase/Pup deamidase family. Pup-conjugating enzyme subfamily.

It carries out the reaction ATP + [prokaryotic ubiquitin-like protein]-L-glutamate + [protein]-L-lysine = ADP + phosphate + N(6)-([prokaryotic ubiquitin-like protein]-gamma-L-glutamyl)-[protein]-L-lysine.. Its pathway is protein degradation; proteasomal Pup-dependent pathway. It participates in protein modification; protein pupylation. Functionally, catalyzes the covalent attachment of the prokaryotic ubiquitin-like protein modifier Pup to the proteasomal substrate proteins, thereby targeting them for proteasomal degradation. This tagging system is termed pupylation. The ligation reaction involves the side-chain carboxylate of the C-terminal glutamate of Pup and the side-chain amino group of a substrate lysine. This is Pup--protein ligase from Mycobacterium sp. (strain JLS).